The primary structure comprises 61 residues: Small ribosomal subunit protein uS14B (61 aa).

Residues cysteine 24, cysteine 27, cysteine 40, and cysteine 43 each coordinate Zn(2+).

The protein belongs to the universal ribosomal protein uS14 family. Zinc-binding uS14 subfamily. As to quaternary structure, part of the 30S ribosomal subunit. Contacts proteins S3 and S10. Zn(2+) serves as cofactor.

Binds 16S rRNA, required for the assembly of 30S particles and may also be responsible for determining the conformation of the 16S rRNA at the A site. This chain is Small ribosomal subunit protein uS14B, found in Bacillus licheniformis (strain ATCC 14580 / DSM 13 / JCM 2505 / CCUG 7422 / NBRC 12200 / NCIMB 9375 / NCTC 10341 / NRRL NRS-1264 / Gibson 46).